We begin with the raw amino-acid sequence, 147 residues long: MKLHELKPAKGAVKEVKRKGRGRATGNGKTAGRGHNGQNSRSGGGVRIGFEGGQMPLARRLPKRGFTNIFAKVYNEVNVDVLNKFEDGTTITPEFLKEMGVIKQIEKNGVKILGNGNLEKNLTIKAQKFTKSAAEKIEAAGGKAEVI.

The segment covering 1–15 (MKLHELKPAKGAVKE) has biased composition (basic and acidic residues). Residues 1-47 (MKLHELKPAKGAVKEVKRKGRGRATGNGKTAGRGHNGQNSRSGGGVR) are disordered. A compositionally biased stretch (gly residues) spans 23-35 (RATGNGKTAGRGH).

It belongs to the universal ribosomal protein uL15 family. Part of the 50S ribosomal subunit.

Its function is as follows. Binds to the 23S rRNA. This Alkaliphilus metalliredigens (strain QYMF) protein is Large ribosomal subunit protein uL15.